A 232-amino-acid chain; its full sequence is Lipopolysaccharide core heptose(II) kinase WaaY (232 aa).

Belongs to the protein kinase superfamily. RfaY/WaaY family.

The catalysed reaction is alpha-D-Glc-(1-&gt;3)-[L-alpha-D-Hep-(1-&gt;7)]-L-alpha-D-Hep-(1-&gt;3)-4-O-PO3(2-)-L-alpha-D-Hep-(1-&gt;5)-[alpha-Kdo-(2-&gt;4)]-alpha-Kdo-(2-&gt;6)-lipid A + ATP = alpha-D-Glc-(1-&gt;3)-[L-alpha-D-Hep-(1-&gt;7)]-4-O-PO3(2-)-L-alpha-D-Hep-(1-&gt;3)-4-O-PO3(2-)-L-alpha-D-Hep-(1-&gt;5)-[alpha-Kdo-(2-&gt;4)]-alpha-Kdo-(2-&gt;6)-lipid A + ADP + H(+). The protein operates within bacterial outer membrane biogenesis; LPS core biosynthesis. Functionally, kinase involved in the biosynthesis of the core oligosaccharide region of lipopolysaccharide (LPS). Catalyzes the phosphorylation of the second heptose unit (HepII) of the inner core. In Escherichia coli (strain K12), this protein is Lipopolysaccharide core heptose(II) kinase WaaY.